The following is a 31-amino-acid chain: Cyclotide psybry C (31 aa).

A cross-link (cyclopeptide (Gly-Asn)) is located at residues 1-31 (GFNPCGETCQIDQTCHAPGCTCSIANICVRN). Intrachain disulfides connect Cys-5–Cys-20, Cys-9–Cys-22, and Cys-15–Cys-28.

Post-translationally, this is a cyclic peptide.

In terms of biological role, probably participates in a plant defense mechanism. This Psychotria brachyceras protein is Cyclotide psybry C.